Here is a 365-residue protein sequence, read N- to C-terminus: Magnesium-chelatase subunit ChlI homolog (365 aa).

An ATP-binding site is contributed by 40 to 47 (EKGTAKST). Positions 340 to 365 (FKQQNNKDNEEKEEHKDDDVKKNMMK) are disordered. Basic and acidic residues predominate over residues 344–365 (NNKDNEEKEEHKDDDVKKNMMK).

The protein belongs to the Mg-chelatase subunits D/I family.

The chain is Magnesium-chelatase subunit ChlI homolog from Methanocaldococcus jannaschii (strain ATCC 43067 / DSM 2661 / JAL-1 / JCM 10045 / NBRC 100440) (Methanococcus jannaschii).